Reading from the N-terminus, the 40-residue chain is Photosystem II reaction center protein J (40 aa).

The helical transmembrane segment at 8-28 (IPLWLVALVAGTGVLVVVGLF) threads the bilayer.

Belongs to the PsbJ family. As to quaternary structure, PSII is composed of 1 copy each of membrane proteins PsbA, PsbB, PsbC, PsbD, PsbE, PsbF, PsbH, PsbI, PsbJ, PsbK, PsbL, PsbM, PsbT, PsbX, PsbY, PsbZ, Psb30/Ycf12, peripheral proteins PsbO, CyanoQ (PsbQ), PsbU, PsbV and a large number of cofactors. It forms dimeric complexes.

The protein resides in the cellular thylakoid membrane. Functionally, one of the components of the core complex of photosystem II (PSII). PSII is a light-driven water:plastoquinone oxidoreductase that uses light energy to abstract electrons from H(2)O, generating O(2) and a proton gradient subsequently used for ATP formation. It consists of a core antenna complex that captures photons, and an electron transfer chain that converts photonic excitation into a charge separation. The chain is Photosystem II reaction center protein J from Trichodesmium erythraeum (strain IMS101).